The following is a 332-amino-acid chain: L-lactate dehydrogenase A chain (332 aa).

NAD(+)-binding positions include Gly-29–Lys-57 and Arg-99. Arg-106, Asn-138, and Arg-169 together coordinate substrate. Asn-138 contributes to the NAD(+) binding site. Catalysis depends on His-193, which acts as the Proton acceptor. Residue Thr-248 participates in substrate binding.

This sequence belongs to the LDH/MDH superfamily. LDH family. As to quaternary structure, homotetramer.

It is found in the cytoplasm. The catalysed reaction is (S)-lactate + NAD(+) = pyruvate + NADH + H(+). Its pathway is fermentation; pyruvate fermentation to lactate; (S)-lactate from pyruvate: step 1/1. Its function is as follows. Interconverts simultaneously and stereospecifically pyruvate and lactate with concomitant interconversion of NADH and NAD(+). The chain is L-lactate dehydrogenase A chain (LDHA) from Columba livia (Rock dove).